The sequence spans 209 residues: Thymidylate kinase (209 aa).

10-17 (GLDGAGKS) is an ATP binding site.

Belongs to the thymidylate kinase family.

It catalyses the reaction dTMP + ATP = dTDP + ADP. In terms of biological role, phosphorylation of dTMP to form dTDP in both de novo and salvage pathways of dTTP synthesis. The sequence is that of Thymidylate kinase from Francisella tularensis subsp. holarctica (strain OSU18).